The chain runs to 342 residues: (Lyso)-N-acylphosphatidylethanolamine lipase (342 aa).

Positions 70–201 (PLVMVHGFGG…KAVASVLGRS (132 aa)) constitute an AB hydrolase-1 domain.

Belongs to the peptidase S33 family. ABHD4/ABHD5 subfamily.

It carries out the reaction N-hexadecanoyl-1,2-di-(9Z-octadecenoyl)-sn-glycero-3-phosphoethanolamine + H2O = N-hexadecanoyl-1-(9Z-octadecenoyl)-sn-glycero-3-phosphoethanolamine + (9Z)-octadecenoate + H(+). The enzyme catalyses an N-acyl-1,2-diacyl-sn-glycero-3-phosphoethanolamine + H2O = N,1-diacyl-sn-glycero-3-phosphoethanolamine + a fatty acid + H(+). The catalysed reaction is N-hexadecanoyl-1-(9Z-octadecenoyl)-sn-glycero-3-phosphoethanolamine + H2O = N-hexadecanoyl-sn-glycero-3-phosphoethanolamine + (9Z)-octadecenoate + H(+). It catalyses the reaction N-octadecanoyl-1-(9Z-octadecenoyl)-sn-glycero-3-phosphoethanolamine + H2O = N-octadecanoyl-sn-glycero-3-phospho-ethanolamine + (9Z)-octadecenoate + H(+). It carries out the reaction N-eicosanoyl-1-(9Z-octadecenoyl)-sn-glycero-3-phosphoethanolamine + H2O = N-eicosanoyl-sn-glycero-3-phosphoethanolamine + (9Z)-octadecenoate + H(+). The enzyme catalyses N,1-di-(9Z-octadecenoyl)-sn-glycero-3-phosphoethanolamine + H2O = N-(9Z-octadecenoyl)-sn-glycero-3-phosphoethanolamine + (9Z)-octadecenoate + H(+). The catalysed reaction is N-(5Z,8Z,11Z,14Z-eicosatetraenoyl)-1-(9Z-octadecenoyl)-sn-glycero-3-phosphoethanolamine + H2O = N-(5Z,8Z,11Z,14Z-eicosatetraenoyl)-sn-glycero-3-phosphoethanolamine + (9Z)-octadecenoate + H(+). It catalyses the reaction 1-octadecanoyl-2-(9Z-octadecenoyl)-sn-glycero-3-phospho-(N-hexadecanoyl)-serine + H2O = 1-octadecanoyl-2-hydroxy-sn-glycero-3-phospho-(N-hexadecanoyl)-serine + (9Z)-octadecenoate + H(+). It carries out the reaction 1-O-(1Z-octadecenoyl)-2-(9Z-octadecenoyl)-sn-glycero-3-phospho-N-hexadecanoyl-ethanolamine + H2O = 1-O-(1Z-octadecenyl)-sn-glycero-3-phospho-N-hexadecanoyl-ethanolamine + (9Z)-octadecenoate + H(+). The enzyme catalyses N,1-diacyl-sn-glycero-3-phosphoethanolamine + H2O = N-acyl-sn-glycero-3-phosphoethanolamine + a fatty acid + H(+). Functionally, lysophospholipase selective for N-acyl phosphatidylethanolamine (NAPE). Contributes to the biosynthesis of N-acyl ethanolamines, including the endocannabinoid anandamide by hydrolyzing the sn-1 and sn-2 acyl chains from N-acyl phosphatidylethanolamine (NAPE) generating glycerophospho-N-acyl ethanolamine (GP-NAE), an intermediate for N-acyl ethanolamine biosynthesis. Hydrolyzes substrates bearing saturated, monounsaturated, polyunsaturated N-acyl chains. Shows no significant activity towards other lysophospholipids, including lysophosphatidylcholine, lysophosphatidylethanolamine and lysophosphatidylserine. In Homo sapiens (Human), this protein is (Lyso)-N-acylphosphatidylethanolamine lipase.